The primary structure comprises 317 residues: Nucleoside ABC transporter permease protein NupC (317 aa).

10 helical membrane-spanning segments follow: residues 9-29, 35-55, 62-82, 98-118, 132-151, 155-172, 203-223, 225-245, 251-271, and 286-306; these read IIVA…IGGV, GIVN…SVVF, MFGS…GALF, IVSG…LLQV, GYWN…IFFT, LPGF…YVLF, AGVL…AQAI, GNFS…AMIF, IGAM…VVGG, and MAPY…AIAP.

It belongs to the binding-protein-dependent transport system permease family. As to quaternary structure, the complex is composed of two ATP-binding proteins (NupA), two transmembrane proteins (NupB and NupC) and a solute-binding protein (BmpA).

It is found in the cell membrane. Functionally, part of an ABC transporter complex involved in the uptake of all common nucleosides. Responsible for the translocation of the substrate across the membrane. This chain is Nucleoside ABC transporter permease protein NupC, found in Lactococcus lactis subsp. cremoris (strain MG1363).